The sequence spans 506 residues: Maturase K (506 aa).

The protein belongs to the intron maturase 2 family. MatK subfamily.

The protein resides in the plastid. It localises to the chloroplast. In terms of biological role, usually encoded in the trnK tRNA gene intron. Probably assists in splicing its own and other chloroplast group II introns. This chain is Maturase K, found in Lactuca sativa (Garden lettuce).